The sequence spans 688 residues: Elongation factor G (688 aa).

Residues 8 to 282 (DKFRNFGIMA…GVVDYLPSPL (275 aa)) form the tr-type G domain. Residues 17–24 (AHIDAGKT), 81–85 (DTPGH), and 135–138 (NKMD) contribute to the GTP site.

It belongs to the TRAFAC class translation factor GTPase superfamily. Classic translation factor GTPase family. EF-G/EF-2 subfamily.

Its subcellular location is the cytoplasm. Its function is as follows. Catalyzes the GTP-dependent ribosomal translocation step during translation elongation. During this step, the ribosome changes from the pre-translocational (PRE) to the post-translocational (POST) state as the newly formed A-site-bound peptidyl-tRNA and P-site-bound deacylated tRNA move to the P and E sites, respectively. Catalyzes the coordinated movement of the two tRNA molecules, the mRNA and conformational changes in the ribosome. The chain is Elongation factor G from Clostridium botulinum (strain Alaska E43 / Type E3).